Consider the following 162-residue polypeptide: 2-C-methyl-D-erythritol 2,4-cyclodiphosphate synthase (162 aa).

A divalent metal cation contacts are provided by aspartate 8 and histidine 10. 4-CDP-2-C-methyl-D-erythritol 2-phosphate contacts are provided by residues 8 to 10 (DVH) and 36 to 37 (HS). Histidine 44 provides a ligand contact to a divalent metal cation. Residues 58 to 60 (DIG), 63 to 67 (FPDTD), 102 to 108 (AQAPKMA), 134 to 137 (TTTE), phenylalanine 141, and arginine 144 each bind 4-CDP-2-C-methyl-D-erythritol 2-phosphate.

It belongs to the IspF family. As to quaternary structure, homotrimer. A divalent metal cation is required as a cofactor.

The enzyme catalyses 4-CDP-2-C-methyl-D-erythritol 2-phosphate = 2-C-methyl-D-erythritol 2,4-cyclic diphosphate + CMP. It functions in the pathway isoprenoid biosynthesis; isopentenyl diphosphate biosynthesis via DXP pathway; isopentenyl diphosphate from 1-deoxy-D-xylulose 5-phosphate: step 4/6. Involved in the biosynthesis of isopentenyl diphosphate (IPP) and dimethylallyl diphosphate (DMAPP), two major building blocks of isoprenoid compounds. Catalyzes the conversion of 4-diphosphocytidyl-2-C-methyl-D-erythritol 2-phosphate (CDP-ME2P) to 2-C-methyl-D-erythritol 2,4-cyclodiphosphate (ME-CPP) with a corresponding release of cytidine 5-monophosphate (CMP). In Yersinia pseudotuberculosis serotype IB (strain PB1/+), this protein is 2-C-methyl-D-erythritol 2,4-cyclodiphosphate synthase.